The sequence spans 640 residues: Threonine--tRNA ligase (640 aa).

The TGS domain maps to 1 to 61 (MVKITYPDNS…MQDSTIKLIT (61 aa)). A catalytic region spans residues 242–533 (DHRKLGPKLN…LIENFAGEFP (292 aa)). Residues Cys-334, His-385, and His-510 each contribute to the Zn(2+) site.

Belongs to the class-II aminoacyl-tRNA synthetase family. Homodimer. Zn(2+) is required as a cofactor.

It localises to the cytoplasm. The catalysed reaction is tRNA(Thr) + L-threonine + ATP = L-threonyl-tRNA(Thr) + AMP + diphosphate + H(+). Catalyzes the attachment of threonine to tRNA(Thr) in a two-step reaction: L-threonine is first activated by ATP to form Thr-AMP and then transferred to the acceptor end of tRNA(Thr). Also edits incorrectly charged L-seryl-tRNA(Thr). This Petrotoga mobilis (strain DSM 10674 / SJ95) protein is Threonine--tRNA ligase.